The chain runs to 298 residues: ADP/ATP translocase 2 (298 aa).

N-acetylmethionine is present on Met1. Residues 1 to 7 lie on the Mitochondrial intermembrane side of the membrane; the sequence is MTDAAVS. Thr2 is modified (N-acetylthreonine; in ADP/ATP translocase 2, N-terminally processed). One copy of the Solcar 1 repeat lies at 6–98; sequence VSFAKDFLAG…FAFKDKYKQI (93 aa). Ser7 is subject to Phosphoserine. A helical transmembrane segment spans residues 8-37; that stretch reads FAKDFLAGGVAAAISKTAVAPIERVKLLLQ. Lys23 carries the post-translational modification N6-malonyllysine. The Mitochondrial matrix portion of the chain corresponds to 38-74; it reads VQHASKQITADKQYKGIIDCVVRIPKEQGVLSFWRGN. Lys43 is subject to N6-succinyllysine. Lys52 bears the N6,N6,N6-trimethyllysine; alternate mark. N6,N6-dimethyllysine; alternate is present on Lys52. N6-methyllysine; alternate is present on Lys52. The helical transmembrane segment at 75 to 99 threads the bilayer; that stretch reads LANVIRYFPTQALNFAFKDKYKQIF. Positions 80 and 92 each coordinate ADP. 2 positions are modified to N6-malonyllysine: Lys92 and Lys96. Residues 100–109 are Mitochondrial intermembrane-facing; sequence LGGVDKRTQF. Lys105 is subject to N6-acetyllysine; alternate. At Lys105 the chain carries N6-succinyllysine; alternate. A helical transmembrane segment spans residues 110–130; it reads WRYFAGNLASGGAAGATSLCF. Solcar repeat units lie at residues 111 to 201 and 212 to 297; these read RYFA…AKGM and ISWM…IKKY. Residues 131–178 lie on the Mitochondrial matrix side of the membrane; the sequence is VYPLDFARTRLAADVGKAGAEREFKGLGDCLVKIYKSDGIKGLYQGFN. Lys147 carries the N6-methyllysine; alternate modification. 2 positions are modified to N6-acetyllysine; alternate: Lys147 and Lys155. N6-succinyllysine; alternate occurs at positions 147 and 155. Lys147 is subject to N6-malonyllysine; alternate. 2 positions are modified to N6-acetyllysine: Lys163 and Lys166. Residues 179–199 form a helical membrane-spanning segment; the sequence is VSVQGIIIYRAAYFGIYDTAK. The Mitochondrial intermembrane segment spans residues 200–210; the sequence is GMLPDPKNTHI. A helical membrane pass occupies residues 211–231; it reads FISWMIAQSVTAVAGLTSYPF. Over 232–273 the chain is Mitochondrial matrix; it reads DTVRRRMMMQSGRKGTDIMYTGTLDCWRKIARDEGGKAFFKG. Arg235 provides a ligand contact to ADP. Residues 235–240 are important for transport activity; it reads RRRMMM. Residues 235–240 carry the Nucleotide carrier signature motif motif; that stretch reads RRRMMM. Lys268 carries the N6-acetyllysine; alternate modification. The residue at position 268 (Lys268) is an N6-succinyllysine; alternate. The chain crosses the membrane as a helical span at residues 274 to 291; the sequence is AWSNVLRGMGGAFVLVLY. Residues 292 to 298 lie on the Mitochondrial intermembrane side of the membrane; that stretch reads DEIKKYT.

It belongs to the mitochondrial carrier (TC 2.A.29) family. As to quaternary structure, monomer. Component of the MMXD complex, which includes CIAO1, ERCC2, CIAO2B, MMS19 and SLC25A5/ANT2. Interacts with AK4. Interacts with TIMM44; leading to inhibit the presequence translocase TIMM23, thereby promoting stabilization of PINK1. In terms of processing, trimethylated by ANTKMT at Lys-52. Present in kidney, brain, heart, liver and skeletal muscle.

The protein localises to the mitochondrion inner membrane. Its subcellular location is the membrane. The catalysed reaction is ADP(in) + ATP(out) = ADP(out) + ATP(in). It catalyses the reaction H(+)(in) = H(+)(out). With respect to regulation, the matrix-open state (m-state) is inhibited by the membrane-permeable bongkrekic acid (BKA). The cytoplasmic-open state (c-state) is inhibited by the membrane-impermeable toxic inhibitor carboxyatractyloside (CATR). Proton transporter activity is inhibited by ADP:ATP antiporter activity. In terms of biological role, ADP:ATP antiporter that mediates import of ADP into the mitochondrial matrix for ATP synthesis, and export of ATP out to fuel the cell. Cycles between the cytoplasmic-open state (c-state) and the matrix-open state (m-state): operates by the alternating access mechanism with a single substrate-binding site intermittently exposed to either the cytosolic (c-state) or matrix (m-state) side of the inner mitochondrial membrane. In addition to its ADP:ATP antiporter activity, also involved in mitochondrial uncoupling and mitochondrial permeability transition pore (mPTP) activity. Plays a role in mitochondrial uncoupling by acting as a proton transporter: proton transport uncouples the proton flows via the electron transport chain and ATP synthase to reduce the efficiency of ATP production and cause mitochondrial thermogenesis. Proton transporter activity is inhibited by ADP:ATP antiporter activity, suggesting that SLC25A5/ANT2 acts as a master regulator of mitochondrial energy output by maintaining a delicate balance between ATP production (ADP:ATP antiporter activity) and thermogenesis (proton transporter activity). Proton transporter activity requires free fatty acids as cofactor, but does not transport it. Probably mediates mitochondrial uncoupling in tissues that do not express UCP1. Also plays a key role in mPTP opening, a non-specific pore that enables free passage of the mitochondrial membranes to solutes of up to 1.5 kDa, and which contributes to cell death. It is however unclear if SLC25A5/ANT2 constitutes a pore-forming component of mPTP or regulates it. Acts as a regulator of mitophagy independently of ADP:ATP antiporter activity: promotes mitophagy via interaction with TIMM44, leading to inhibit the presequence translocase TIMM23, thereby promoting stabilization of PINK1. As part of the mitotic spindle-associated MMXD complex it may play a role in chromosome segregation. The sequence is that of ADP/ATP translocase 2 from Rattus norvegicus (Rat).